Consider the following 315-residue polypeptide: Putative serine/threonine-protein phosphatase PP2A-4 catalytic subunit (315 aa).

Residues D63, H65, D91, and N123 each contribute to the Mn(2+) site. The active-site Proton donor is H124. Positions 173 and 247 each coordinate Mn(2+).

Belongs to the PPP phosphatase family. PP-2A subfamily. Mn(2+) is required as a cofactor.

The protein resides in the cytoplasm. It carries out the reaction O-phospho-L-seryl-[protein] + H2O = L-seryl-[protein] + phosphate. It catalyses the reaction O-phospho-L-threonyl-[protein] + H2O = L-threonyl-[protein] + phosphate. The chain is Putative serine/threonine-protein phosphatase PP2A-4 catalytic subunit (PP2A4) from Oryza sativa subsp. indica (Rice).